Here is a 285-residue protein sequence, read N- to C-terminus: MVATILDGRMLSKKIRTNVSEKVSLLKQEGITPKLVVILVGEDPASQVYVRNKRKTAHALGIEAVDIRLPENVEEDELIRLIDELNSDGTVHGILVQLPLPKHINENKVTHRIIPEKDVDGFHPLNIGKLFMNIPGPLPCTPRGIMEFFKEYDIPVSGKRVVIVGRSNIVGRPMAALLVNSDATVTIAHSKTKNLAEVTKQADILIVAIGKGEFIDENYVKKGAVVIDVGMNRNNDGKLVGDVNMESVSKVASYITPVPGGVGPMTIAMLMKQTVELAERSVAGE.

NADP(+) contacts are provided by residues 165 to 167 (GRS) and S190.

Belongs to the tetrahydrofolate dehydrogenase/cyclohydrolase family. As to quaternary structure, homodimer.

The enzyme catalyses (6R)-5,10-methylene-5,6,7,8-tetrahydrofolate + NADP(+) = (6R)-5,10-methenyltetrahydrofolate + NADPH. It carries out the reaction (6R)-5,10-methenyltetrahydrofolate + H2O = (6R)-10-formyltetrahydrofolate + H(+). The protein operates within one-carbon metabolism; tetrahydrofolate interconversion. In terms of biological role, catalyzes the oxidation of 5,10-methylenetetrahydrofolate to 5,10-methenyltetrahydrofolate and then the hydrolysis of 5,10-methenyltetrahydrofolate to 10-formyltetrahydrofolate. The chain is Bifunctional protein FolD from Ligilactobacillus salivarius (strain UCC118) (Lactobacillus salivarius).